A 744-amino-acid polypeptide reads, in one-letter code: MDHAEENEILAATQRYYVERPIFSHPVLQERLHTKDKVPDSIADKLKQAFTCTPKKIRNIIYMFLPITKWLPAYKFKEYVLGDLVSGISTGVLQLPQGLAFAMLAAVPPIFGLYSSFYPVIMYCFLGTSRHISIGPFAVISLMIGGVAVRLVPDDIVIPGGVNATNGTEARDALRVKVAMSVTLLSGIIQFCLGVCRFGFVAIYLTEPLVRGFTTAAAVHVFTSMLKYLFGVKTKRYSGIFSVVYSTVAVLQNVKNLNVCSLGVGLMVFGLLLGGKEFNERFKEKLPAPIPLEFFAVVMGTGISAGFNLKESYNVDVVGTLPLGLLPPANPDTSLFHLVYVDAIAIAIVGFSVTISMAKTLANKHGYQVDGNQELIALGLCNSIGSLFQTFSISCSLSRSLVQEGTGGKTQLAGCLASLMILLVILATGFLFESLPQAVLSAIVIVNLKGMFMQFSDLPFFWRTSKIELTIWLTTFVSSLFLGLDYGLITAVIIALLTVIYRTQSPSYKVLGKLPETDVYIDIDAYEEVKEIPGIKIFQINAPIYYANSDLYSNALKRKTGVNPAVIMGARRKAMRKYAKEVGNANMANATVVKADAEVDGEDATKPEEEDGEVKYPPIVIKSTFPEEMQRFMPPGDNVHTVILDFTQVNFIDSVGVKTLAGIVKEYGDVGIYVYLAGCSAQVVNDLTRNRFFENPALWELLFHSIHDAVLGSQLREALAEQEASAPPSQEDLEPNATPATPEA.

The Cytoplasmic segment spans residues 1–75 (MDHAEENEIL…PITKWLPAYK (75 aa)). The chain crosses the membrane as a helical span at residues 76 to 105 (FKEYVLGDLVSGISTGVLQLPQGLAFAMLA). The Extracellular segment spans residues 106-108 (AVP). The helical transmembrane segment at 109-126 (PIFGLYSSFYPVIMYCFL) threads the bilayer. Residues 127-137 (GTSRHISIGPF) lie on the Cytoplasmic side of the membrane. The chain crosses the membrane as a helical span at residues 138–151 (AVISLMIGGVAVRL). The Extracellular portion of the chain corresponds to 152-168 (VPDDIVIPGGVNATNGT). Residues 158-168 (IPGGVNATNGT) carry the Involved in motor function motif. Residues Asn163 and Asn166 are each glycosylated (N-linked (GlcNAc...) asparagine). A helical transmembrane segment spans residues 169-196 (EARDALRVKVAMSVTLLSGIIQFCLGVC). Residues 197 to 206 (RFGFVAIYLT) are Cytoplasmic-facing. Residues 207–230 (EPLVRGFTTAAAVHVFTSMLKYLF) form a helical membrane-spanning segment. Residues 231–241 (GVKTKRYSGIF) lie on the Extracellular side of the membrane. An intramembrane region (helical) is located at residues 242–253 (SVVYSTVAVLQN). The Extracellular segment spans residues 254-258 (VKNLN). Residues 259 to 282 (VCSLGVGLMVFGLLLGGKEFNERF) traverse the membrane as a helical segment. At 283 to 291 (KEKLPAPIP) the chain is on the cytoplasmic side. The helical transmembrane segment at 292–307 (LEFFAVVMGTGISAGF) threads the bilayer. At 308–332 (NLKESYNVDVVGTLPLGLLPPANPD) the chain is on the extracellular side. Residues 333–367 (TSLFHLVYVDAIAIAIVGFSVTISMAKTLANKHGY) form a helical membrane-spanning segment. Over 368-370 (QVD) the chain is Cytoplasmic. A helical membrane pass occupies residues 371–388 (GNQELIALGLCNSIGSLF). Over 389-396 (QTFSISCS) the chain is Extracellular. A helical transmembrane segment spans residues 397–406 (LSRSLVQEGT). Ser398 provides a ligand contact to salicylate. Residues 407-410 (GGKT) are Cytoplasmic-facing. A helical membrane pass occupies residues 411–432 (QLAGCLASLMILLVILATGFLF). The Extracellular segment spans residues 433–436 (ESLP). A helical transmembrane segment spans residues 437–464 (QAVLSAIVIVNLKGMFMQFSDLPFFWRT). A topological domain (cytoplasmic) is located at residue Ser465. Residues 466 to 481 (KIELTIWLTTFVSSLF) form a helical membrane-spanning segment. The Extracellular segment spans residues 482 to 483 (LG). Residues 484–504 (LDYGLITAVIIALLTVIYRTQ) form a helical membrane-spanning segment. Residues 505–718 (SPSYKVLGKL…AVLGSQLREA (214 aa)) form an extended region for STAS domain region. The Cytoplasmic portion of the chain corresponds to 505 to 744 (SPSYKVLGKL…PNATPATPEA (240 aa)). The STAS domain occupies 525 to 713 (AYEEVKEIPG…HSIHDAVLGS (189 aa)). Residues 718 to 744 (ALAEQEASAPPSQEDLEPNATPATPEA) are disordered.

It belongs to the SLC26A/SulP transporter (TC 2.A.53) family. In terms of assembly, homodimer. Interacts (via STAS domain) with CALM; this interaction is calcium-dependent and the STAS domain interacts with only one lobe of CALM which is an elongated conformation. Interacts with MYH1.

Its subcellular location is the lateral cell membrane. The enzyme catalyses 2 hydrogencarbonate(in) + chloride(out) = 2 hydrogencarbonate(out) + chloride(in). In terms of biological role, voltage-sensitive motor protein that drives outer hair cell (OHC) electromotility (eM) and participates in sound amplification in the hearing organ. Converts changes in the transmembrane electric potential into mechanical displacements resulting in the coupling of its expansion to movement of a charged voltage sensor across the lipid membrane. The nature of the voltage sensor is not completely clear, and two models compete. In the first model, acts as an incomplete transporter where intracellular chloride anion acts as extrinsic voltage sensor that drives conformational change in the protein which is sufficient to produce a length change in the plane of the membrane and hence in the length of the OHC. The second model in which multiple charged amino acid residues are distributed at the intracellular and extracellular membrane interfaces that form an intrinsic voltage sensor, whose movement produces the non-linear capacitance (NLC). However, the effective voltage sensor may be the result of a hybrid voltage sensor, assembled from intrinsic charge (charged residues) and extrinsic charge (bound anion). Notably, binding of anions to the anion-binding pocket partially neutralizes the intrinsic positive charge rather than to form an electrically negative sensor, therefore remaining charge may serve as voltage sensor that, after depolarization, moves from down (expanded state) to up (contracted) conformation, which is accompanied by an eccentric contraction of the intermembrane cross-sectional area of the protein as well as a major increase in the hydrophobic thickness of the protein having as consequences the plasma membrane thickening and the cell contraction after membrane depolarization. The anion-binding pocket transits from the inward-open (Down) state, where it is exposed toward the intracellular solvent in the absence of anion, to the occluded (Up) state upon anion binding. Salicylate competes for the anion-binding site and inhibits the voltage-sensor movement, and therefore inhibits the charge transfer and electromotility by displacing Cl(-) from the anion-binding site and by preventing the structural transitions to the contracted state. In addition, can act as a weak Cl(-)/HCO3(-) antiporter across the cell membrane and so regulate the intracellular pH of the outer hair cells (OHCs), while firstly found as being unable to mediate electrogenic anion transport. Moreover, supports a role in cardiac mechanical amplification serving as an elastic element to enhance the actomyosin- based sarcomere contraction system. This is Prestin from Homo sapiens (Human).